Consider the following 258-residue polypeptide: 5'-nucleotidase SurE (258 aa).

4 residues coordinate a divalent metal cation: Asp-8, Asp-9, Ser-40, and Asn-98.

The protein belongs to the SurE nucleotidase family. Requires a divalent metal cation as cofactor.

The protein localises to the cytoplasm. The catalysed reaction is a ribonucleoside 5'-phosphate + H2O = a ribonucleoside + phosphate. Functionally, nucleotidase that shows phosphatase activity on nucleoside 5'-monophosphates. In Synechococcus elongatus (strain ATCC 33912 / PCC 7942 / FACHB-805) (Anacystis nidulans R2), this protein is 5'-nucleotidase SurE.